The sequence spans 315 residues: 4-diphosphocytidyl-2-C-methyl-D-erythritol kinase (315 aa).

Residue K8 is part of the active site. 93–103 contacts ATP; the sequence is PVAAGLAGGSS. D135 is an active-site residue.

It belongs to the GHMP kinase family. IspE subfamily.

The catalysed reaction is 4-CDP-2-C-methyl-D-erythritol + ATP = 4-CDP-2-C-methyl-D-erythritol 2-phosphate + ADP + H(+). The protein operates within isoprenoid biosynthesis; isopentenyl diphosphate biosynthesis via DXP pathway; isopentenyl diphosphate from 1-deoxy-D-xylulose 5-phosphate: step 3/6. Its function is as follows. Catalyzes the phosphorylation of the position 2 hydroxy group of 4-diphosphocytidyl-2C-methyl-D-erythritol. The chain is 4-diphosphocytidyl-2-C-methyl-D-erythritol kinase from Heliobacterium modesticaldum (strain ATCC 51547 / Ice1).